A 216-amino-acid polypeptide reads, in one-letter code: UPF0301 protein BBta_6966 (216 aa).

Belongs to the UPF0301 (AlgH) family.

This chain is UPF0301 protein BBta_6966, found in Bradyrhizobium sp. (strain BTAi1 / ATCC BAA-1182).